The sequence spans 154 residues: UPF0178 protein Sala_2376 (154 aa).

It belongs to the UPF0178 family.

This Sphingopyxis alaskensis (strain DSM 13593 / LMG 18877 / RB2256) (Sphingomonas alaskensis) protein is UPF0178 protein Sala_2376.